The sequence spans 215 residues: Octanoyltransferase (215 aa).

Residues 31 to 206 (TSAEDEIWLV…QLVKHLDYAE (176 aa)) form the BPL/LPL catalytic domain. Substrate contacts are provided by residues 70-77 (RGGQVTYH), 137-139 (SLG), and 150-152 (GLA). Cys168 serves as the catalytic Acyl-thioester intermediate.

It belongs to the LipB family.

The protein resides in the cytoplasm. The enzyme catalyses octanoyl-[ACP] + L-lysyl-[protein] = N(6)-octanoyl-L-lysyl-[protein] + holo-[ACP] + H(+). The protein operates within protein modification; protein lipoylation via endogenous pathway; protein N(6)-(lipoyl)lysine from octanoyl-[acyl-carrier-protein]: step 1/2. Functionally, catalyzes the transfer of endogenously produced octanoic acid from octanoyl-acyl-carrier-protein onto the lipoyl domains of lipoate-dependent enzymes. Lipoyl-ACP can also act as a substrate although octanoyl-ACP is likely to be the physiological substrate. The polypeptide is Octanoyltransferase (Pseudomonas fluorescens (strain SBW25)).